Consider the following 1021-residue polypeptide: DNA-directed RNA polymerase 2B, chloroplastic/mitochondrial (1021 aa).

The interval 315 to 337 is disordered; that stretch reads KKQKAEKDKQKEDGEHVTQEQEK. Active-site residues include aspartate 722, lysine 797, and aspartate 954.

The protein belongs to the phage and mitochondrial RNA polymerase family.

It localises to the plastid. Its subcellular location is the chloroplast. The protein resides in the mitochondrion. The catalysed reaction is RNA(n) + a ribonucleoside 5'-triphosphate = RNA(n+1) + diphosphate. In terms of biological role, DNA-dependent RNA polymerase catalyzes the transcription of DNA into RNA using the four ribonucleoside triphosphates as substrates. The chain is DNA-directed RNA polymerase 2B, chloroplastic/mitochondrial (RPOT2-TOM) from Nicotiana tabacum (Common tobacco).